A 184-amino-acid chain; its full sequence is Large ribosomal subunit protein uL6 (184 aa).

The protein belongs to the universal ribosomal protein uL6 family. In terms of assembly, part of the 50S ribosomal subunit.

In terms of biological role, this protein binds to the 23S rRNA, and is important in its secondary structure. It is located near the subunit interface in the base of the L7/L12 stalk, and near the tRNA binding site of the peptidyltransferase center. This is Large ribosomal subunit protein uL6 from Thermosipho melanesiensis (strain DSM 12029 / CIP 104789 / BI429).